The following is a 332-amino-acid chain: Probable allantoicase (332 aa).

This sequence belongs to the allantoicase family.

The enzyme catalyses allantoate + H2O = (S)-ureidoglycolate + urea. The protein operates within nitrogen metabolism; (S)-allantoin degradation; (S)-ureidoglycolate from allantoate (aminidohydrolase route): step 1/1. The chain is Probable allantoicase from Pseudomonas aeruginosa (strain UCBPP-PA14).